The following is a 434-amino-acid chain: Protein phosphatase 2C 56 (434 aa).

One can recognise a PPM-type phosphatase domain in the interval 128 to 422 (LYGFTSICGR…DNISVVVVDL (295 aa)). Mg(2+) contacts are provided by D177, D261, S262, D347, and D413. Residues 423-427 (KPRRK) carry the Nuclear localization signal motif.

The protein belongs to the PP2C family. In terms of assembly, interacts with SPK1, ATHB-6, CIPK15/PKS3, GPX3, SRK2E/OST1, SRK2D, SRK2I, SCAR1, SCAR2, SCAR3 and SCARL. Binds to the PA released by the phospholipase D alpha 1 (PLDALPHA1) in response to ABA during the stomatal closure regulation. Interacts with ABA-bounded PYR1, PYL1, PYL2, PYL3, PYL4, PYL5, PYL6, PYL7, PYL8, PYL9, PYL10, and with free PYL2, PYL3, PYL4 and PYL13. Binds to RPL12B, CPK21 and CPK23. Binds to MAPKKK18. Interacts with KIN10. Interacts with phosphorylated PYL8/RCAR3. Requires Mg(2+) as cofactor. Mn(2+) is required as a cofactor. Expressed in seeds and seedlings. In roots, confined to lateral root caps and columella cells.

It is found in the nucleus. Its subcellular location is the cytoplasm. The protein resides in the cell membrane. It carries out the reaction O-phospho-L-seryl-[protein] + H2O = L-seryl-[protein] + phosphate. The enzyme catalyses O-phospho-L-threonyl-[protein] + H2O = L-threonyl-[protein] + phosphate. With respect to regulation, phosphatase activity repressed by oxidized GPX3 and phosphatidic acid (PA). PA is produced by PLD alpha 1 in response to ABA. Repressed by PYR/PYL/RCAR ABA receptors in an ABA-dependent manner. Its function is as follows. Key component and repressor of the abscisic acid (ABA) signaling pathway that regulates numerous ABA responses, such as stomatal closure, osmotic water permeability of the plasma membrane (Pos), drought-induced resistance and rhizogenesis, response to glucose, high light stress, seed germination and inhibition of vegetative growth. During the stomatal closure regulation, modulates the inward calcium-channel permeability as well as the actin reorganization in guard cells in response to ABA. Involved in the resistance to the bacterial pathogen Pseudomonas syringae pv. tomato. Controls negatively fibrillin expression that is involved in mediating ABA-induced photoprotection. May be involved in ABA content regulation. Plays a role in the Pro accumulation in response to reduced water availability (low water potential). Required for the ABA negative regulation of the ethylene-induced hyponastic growth. Involved in acquired thermotolerance of root growth and seedling survival. Activates/represses SRK2E/OST1 in response to ABA-dependent stimuli, especially in stomata closure regulation involving SLAC1. Represses MAPKKK18 activity and promotes MAPKKK18 degradation by the proteasome pathway upon abscisic acid (ABA) treatment. Represses KIN10 activity by the specific dephosphorylation of its T-loop Thr-198, leading to a poststress inactivation of SnRK1 signaling. Restricts MAPKKK20 activity by dephosphorylation. This chain is Protein phosphatase 2C 56, found in Arabidopsis thaliana (Mouse-ear cress).